Consider the following 290-residue polypeptide: tRNA (adenine(58)-N(1))-methyltransferase catalytic subunit TRMT61A (290 aa).

The residue at position 2 (Ser-2) is an N-acetylserine. Substrate stretches follow at residues 20–22 (LGH), 35–42 (QTQTRHGV), 64–65 (GW), 85–89 (QILYS), and 110–117 (SGTGSGSV). S-adenosyl-L-methionine is bound by residues Leu-87, 114–116 (SGS), Glu-135, Arg-140, 163–164 (DV), and Asp-181. Substrate stretches follow at residues 180–183 (LDIP) and 205–212 (SFSPCIEQ). Residue Ser-264 is modified to Phosphoserine. Thr-279 provides a ligand contact to substrate.

The protein belongs to the class I-like SAM-binding methyltransferase superfamily. TRM61 family. In terms of assembly, heterotetramer; composed of two copies of TRMT6 and two copies of TRMT61A.

The protein resides in the nucleus. It catalyses the reaction adenosine(58) in tRNA + S-adenosyl-L-methionine = N(1)-methyladenosine(58) in tRNA + S-adenosyl-L-homocysteine + H(+). The catalysed reaction is an adenosine in mRNA + S-adenosyl-L-methionine = an N(1)-methyladenosine in mRNA + S-adenosyl-L-homocysteine + H(+). Its function is as follows. Catalytic subunit of tRNA (adenine-N(1)-)-methyltransferase, which catalyzes the formation of N(1)-methyladenine at position 58 (m1A58) in initiator methionyl-tRNA. Catalytic subunit of mRNA N(1)-methyltransferase complex, which mediates methylation of adenosine residues at the N(1) position of a small subset of mRNAs: N(1) methylation takes place in tRNA T-loop-like structures of mRNAs and is only present at low stoichiometries. The protein is tRNA (adenine(58)-N(1))-methyltransferase catalytic subunit TRMT61A (Trmt61a) of Mus musculus (Mouse).